The sequence spans 267 residues: DNA repair protein RecO (267 aa).

Belongs to the RecO family.

Its function is as follows. Involved in DNA repair and RecF pathway recombination. The protein is DNA repair protein RecO of Moorella thermoacetica (strain ATCC 39073 / JCM 9320).